We begin with the raw amino-acid sequence, 264 residues long: Orotidine 5'-phosphate decarboxylase (264 aa).

Substrate is bound by residues Asp40, 62–64, 93–102, Tyr214, and Arg233; these read KTH and DRKFADIGNT. Lys95 serves as the catalytic Proton donor.

This sequence belongs to the OMP decarboxylase family.

It catalyses the reaction orotidine 5'-phosphate + H(+) = UMP + CO2. The protein operates within pyrimidine metabolism; UMP biosynthesis via de novo pathway; UMP from orotate: step 2/2. The sequence is that of Orotidine 5'-phosphate decarboxylase (ura4) from Schizosaccharomyces pombe (strain 972 / ATCC 24843) (Fission yeast).